The primary structure comprises 449 residues: Ribulose bisphosphate carboxylase large chain (449 aa).

K5 is modified (N6,N6,N6-trimethyllysine). The substrate site is built by N114 and T164. K166 (proton acceptor) is an active-site residue. K168 serves as a coordination point for substrate. The Mg(2+) site is built by K192, D194, and E195. K192 bears the N6-carboxylysine mark. The active-site Proton acceptor is H285. Substrate contacts are provided by R286, H318, and S370.

This sequence belongs to the RuBisCO large chain family. Type I subfamily. Heterohexadecamer of 8 large chains and 8 small chains; disulfide-linked. The disulfide link is formed within the large subunit homodimers. Mg(2+) is required as a cofactor. In terms of processing, the disulfide bond which can form in the large chain dimeric partners within the hexadecamer appears to be associated with oxidative stress and protein turnover.

The protein resides in the plastid. The protein localises to the chloroplast. The enzyme catalyses 2 (2R)-3-phosphoglycerate + 2 H(+) = D-ribulose 1,5-bisphosphate + CO2 + H2O. It catalyses the reaction D-ribulose 1,5-bisphosphate + O2 = 2-phosphoglycolate + (2R)-3-phosphoglycerate + 2 H(+). RuBisCO catalyzes two reactions: the carboxylation of D-ribulose 1,5-bisphosphate, the primary event in carbon dioxide fixation, as well as the oxidative fragmentation of the pentose substrate in the photorespiration process. Both reactions occur simultaneously and in competition at the same active site. This Zamioculcas zamiifolia (Aroid palm) protein is Ribulose bisphosphate carboxylase large chain.